Reading from the N-terminus, the 337-residue chain is Anthranilate phosphoribosyltransferase (337 aa).

5-phospho-alpha-D-ribose 1-diphosphate contacts are provided by residues Gly81, 84–85 (GD), Ser89, 91–94 (NVST), 109–117 (KHGNRAMSS), and Ala121. Gly81 serves as a coordination point for anthranilate. Ser93 serves as a coordination point for Mg(2+). Residue Asn112 participates in anthranilate binding. Arg167 provides a ligand contact to anthranilate. 2 residues coordinate Mg(2+): Asp226 and Glu227.

Belongs to the anthranilate phosphoribosyltransferase family. In terms of assembly, homodimer. Mg(2+) is required as a cofactor.

It catalyses the reaction N-(5-phospho-beta-D-ribosyl)anthranilate + diphosphate = 5-phospho-alpha-D-ribose 1-diphosphate + anthranilate. It participates in amino-acid biosynthesis; L-tryptophan biosynthesis; L-tryptophan from chorismate: step 2/5. Its function is as follows. Catalyzes the transfer of the phosphoribosyl group of 5-phosphorylribose-1-pyrophosphate (PRPP) to anthranilate to yield N-(5'-phosphoribosyl)-anthranilate (PRA). This chain is Anthranilate phosphoribosyltransferase, found in Afipia carboxidovorans (strain ATCC 49405 / DSM 1227 / KCTC 32145 / OM5) (Oligotropha carboxidovorans).